Consider the following 327-residue polypeptide: Phenylalanine--tRNA ligase alpha subunit (327 aa).

Position 252 (Glu-252) interacts with Mg(2+).

Belongs to the class-II aminoacyl-tRNA synthetase family. Phe-tRNA synthetase alpha subunit type 1 subfamily. As to quaternary structure, tetramer of two alpha and two beta subunits. Requires Mg(2+) as cofactor.

It is found in the cytoplasm. It carries out the reaction tRNA(Phe) + L-phenylalanine + ATP = L-phenylalanyl-tRNA(Phe) + AMP + diphosphate + H(+). In Salmonella newport (strain SL254), this protein is Phenylalanine--tRNA ligase alpha subunit.